A 444-amino-acid chain; its full sequence is MAESLHIVGAGMAGSEAAWQAAEMGVPVVLHEMRPKVGTFAHRTGQFAEMVCSNSFRSDDDERNAVGLLHWEMRAARGLIMEMAAAHRLPAGGALAVDRDPFAESVTARLRAHPLISVVEEEVAELPSSGNWIVATGPLTSSALAESLRALTGAEALAFFDAIAPIVYAETIDMEVAWRQSRYDKGETEDERTAYINCPMNREQYEAFIDALLAAEKTEFHEGETAGYFDGCLPIEVMAERGRETLRHGPMKPVGLTNAHRPEEKAYAVVQLRRDNKLGTLYNIVGFQTKMKYGAQTAVFKMIPGLENASFARLGGIHRNTFLNSPTLLDDRMRLKLRPNIRFAGQVTGVEGYVESAAMGLLAGRMAAAEILGRDLPPPPPETAMGALVTHITGGAEAKSFQPMNVNFGLFPPIDARGGRRGRKDRYKAYTDRAKAAFTEWLGA.

An FAD-binding site is contributed by 9 to 14 (GAGMAG).

Belongs to the MnmG family. TrmFO subfamily. Requires FAD as cofactor.

Its subcellular location is the cytoplasm. It catalyses the reaction uridine(54) in tRNA + (6R)-5,10-methylene-5,6,7,8-tetrahydrofolate + NADH + H(+) = 5-methyluridine(54) in tRNA + (6S)-5,6,7,8-tetrahydrofolate + NAD(+). It carries out the reaction uridine(54) in tRNA + (6R)-5,10-methylene-5,6,7,8-tetrahydrofolate + NADPH + H(+) = 5-methyluridine(54) in tRNA + (6S)-5,6,7,8-tetrahydrofolate + NADP(+). Its function is as follows. Catalyzes the folate-dependent formation of 5-methyl-uridine at position 54 (M-5-U54) in all tRNAs. This chain is Methylenetetrahydrofolate--tRNA-(uracil-5-)-methyltransferase TrmFO, found in Cereibacter sphaeroides (strain KD131 / KCTC 12085) (Rhodobacter sphaeroides).